A 368-amino-acid chain; its full sequence is N-acetylneuraminate epimerase (368 aa).

An N-terminal signal peptide occupies residues 1–19 (MNKTITALTIIMASFATNA). Kelch repeat units follow at residues 40 to 84 (TVYI…AFID), 86 to 137 (NLYV…FVHN), 139 to 173 (KAYVTGGVNQNIFNGYFEDLNEAGKDSTTIDKINA), 174 to 219 (HYFD…VNKG), 222 to 265 (TWLI…VAGG), 287 to 336 (ENYQ…PWNN), and 338 to 367 (LLIIGGETAGGKAVTDSVLISVKDNKVTVQ). Glutamate 228 serves as the catalytic Proton acceptor.

Belongs to the NanM family. As to quaternary structure, homodimer.

It localises to the periplasm. The enzyme catalyses N-acetyl-alpha-neuraminate = N-acetyl-beta-neuraminate. Converts alpha-N-acetylneuranimic acid (Neu5Ac) to the beta-anomer, accelerating the equilibrium between the alpha- and beta-anomers. Probably facilitates sialidase-negative bacteria to compete successfully for limited amounts of extracellular Neu5Ac, which is likely taken up in the beta-anomer. In addition, the rapid removal of sialic acid from solution might be advantageous to the bacterium to damp down host responses. The protein is N-acetylneuraminate epimerase of Escherichia coli O1:K1 / APEC.